The sequence spans 600 residues: Integrator complex subunit 11 (600 aa).

His-68, His-70, Asp-72, His-73, His-157, and Asp-178 together coordinate Zn(2+). The short motif at 68-73 (HFHLDH) is the HXHXDH motif element. Glu-203 is a catalytic residue. His-414 contacts Zn(2+). Residues 469 to 479 (LLPDAKKPKLM) carry the Nuclear localization signal motif.

It belongs to the metallo-beta-lactamase superfamily. RNA-metabolizing metallo-beta-lactamase-like family. INTS11 subfamily. As to quaternary structure, component of the Integrator complex, composed of core subunits INTS1, INTS2, INTS3, INTS4, INTS5, INTS6, INTS7, INTS8, INTS9/RC74, INTS10, INTS11/CPSF3L, INTS12, INTS13, INTS14 and INTS15. The core complex associates with protein phosphatase 2A subunits PPP2CA and PPP2R1A, to form the Integrator-PP2A (INTAC) complex. INTS11 is part of the RNA endonuclease subcomplex, composed of INTS4, INTS9, INTS11 and inositol hexakisphosphate (InsP6). It depends on Zn(2+) as a cofactor.

It is found in the nucleus. Its subcellular location is the cytoplasm. RNA endonuclease component of the integrator complex, a multiprotein complex that terminates RNA polymerase II (Pol II) transcription in the promoter-proximal region of genes. The integrator complex provides a quality checkpoint during transcription elongation by driving premature transcription termination of transcripts that are unfavorably configured for transcriptional elongation: the complex terminates transcription by (1) catalyzing dephosphorylation of the C-terminal domain (CTD) of Pol II subunit POLR2A/RPB1 and SUPT5H/SPT5, (2) degrading the exiting nascent RNA transcript via endonuclease activity and (3) promoting the release of Pol II from bound DNA. The integrator complex is also involved in terminating the synthesis of non-coding Pol II transcripts, such as enhancer RNAs (eRNAs), small nuclear RNAs (snRNAs), telomerase RNAs and long non-coding RNAs (lncRNAs). Within the integrator complex, INTS11 constitutes the RNA endonuclease subunit that degrades exiting nascent RNA transcripts. This is Integrator complex subunit 11 (INTS11) from Gallus gallus (Chicken).